A 714-amino-acid chain; its full sequence is Putative glutamine--fructose-6-phosphate aminotransferase [isomerizing] (714 aa).

Cys2 serves as the catalytic Nucleophile; for GATase activity. The 320-residue stretch at 2 to 321 (CGIFGYCNFL…DNDIAHIYDG (320 aa)) folds into the Glutamine amidotransferase type-2 domain. Polar residues predominate over residues 266-280 (STTSTFNHGSSTETP). The tract at residues 266 to 285 (STTSTFNHGSSTETPAENGL) is disordered. SIS domains follow at residues 387-526 (WLTE…DLVS) and 559-704 (CDKK…VDLP).

The enzyme catalyses D-fructose 6-phosphate + L-glutamine = D-glucosamine 6-phosphate + L-glutamate. It functions in the pathway nucleotide-sugar biosynthesis; UDP-N-acetyl-alpha-D-glucosamine biosynthesis; alpha-D-glucosamine 6-phosphate from D-fructose 6-phosphate: step 1/1. Functionally, involved in amino sugar synthesis (formation of chitin, supplies the amino sugars of asparagine-linked oligosaccharides of glycoproteins). In Saccharomyces cerevisiae (strain YJM789) (Baker's yeast), this protein is Putative glutamine--fructose-6-phosphate aminotransferase [isomerizing].